The following is a 460-amino-acid chain: Bifunctional protein GlmU (460 aa).

The tract at residues 1–235 is pyrophosphorylase; the sequence is MALSAAIVLA…PLTVEGVNDR (235 aa). Residues 9–12, lysine 23, glutamine 76, and 81–82 contribute to the UDP-N-acetyl-alpha-D-glucosamine site; these read LAAG and GT. Aspartate 109 serves as a coordination point for Mg(2+). 4 residues coordinate UDP-N-acetyl-alpha-D-glucosamine: glycine 146, glutamate 161, asparagine 176, and asparagine 233. Asparagine 233 provides a ligand contact to Mg(2+). The linker stretch occupies residues 236–256; sequence VQLAALSKTYNRRVCERWMRN. The N-acetyltransferase stretch occupies residues 257-460; it reads GVTILDPETT…VEGWKPAWER (204 aa). UDP-N-acetyl-alpha-D-glucosamine-binding residues include arginine 338 and lysine 356. Histidine 368 serves as the catalytic Proton acceptor. Residues tyrosine 371 and asparagine 382 each contribute to the UDP-N-acetyl-alpha-D-glucosamine site. Residues 391-392 and alanine 428 contribute to the acetyl-CoA site; that span reads NY.

This sequence in the N-terminal section; belongs to the N-acetylglucosamine-1-phosphate uridyltransferase family. In the C-terminal section; belongs to the transferase hexapeptide repeat family. As to quaternary structure, homotrimer. The cofactor is Mg(2+).

It localises to the cytoplasm. The enzyme catalyses alpha-D-glucosamine 1-phosphate + acetyl-CoA = N-acetyl-alpha-D-glucosamine 1-phosphate + CoA + H(+). The catalysed reaction is N-acetyl-alpha-D-glucosamine 1-phosphate + UTP + H(+) = UDP-N-acetyl-alpha-D-glucosamine + diphosphate. It functions in the pathway nucleotide-sugar biosynthesis; UDP-N-acetyl-alpha-D-glucosamine biosynthesis; N-acetyl-alpha-D-glucosamine 1-phosphate from alpha-D-glucosamine 6-phosphate (route II): step 2/2. It participates in nucleotide-sugar biosynthesis; UDP-N-acetyl-alpha-D-glucosamine biosynthesis; UDP-N-acetyl-alpha-D-glucosamine from N-acetyl-alpha-D-glucosamine 1-phosphate: step 1/1. The protein operates within bacterial outer membrane biogenesis; LPS lipid A biosynthesis. Functionally, catalyzes the last two sequential reactions in the de novo biosynthetic pathway for UDP-N-acetylglucosamine (UDP-GlcNAc). The C-terminal domain catalyzes the transfer of acetyl group from acetyl coenzyme A to glucosamine-1-phosphate (GlcN-1-P) to produce N-acetylglucosamine-1-phosphate (GlcNAc-1-P), which is converted into UDP-GlcNAc by the transfer of uridine 5-monophosphate (from uridine 5-triphosphate), a reaction catalyzed by the N-terminal domain. The sequence is that of Bifunctional protein GlmU from Bifidobacterium longum subsp. infantis (strain ATCC 15697 / DSM 20088 / JCM 1222 / NCTC 11817 / S12).